A 190-amino-acid chain; its full sequence is Peptidyl-tRNA hydrolase (190 aa).

Tyrosine 14 serves as a coordination point for tRNA. Histidine 19 acts as the Proton acceptor in catalysis. TRNA contacts are provided by tyrosine 64, asparagine 66, and asparagine 112.

This sequence belongs to the PTH family. Monomer.

Its subcellular location is the cytoplasm. The catalysed reaction is an N-acyl-L-alpha-aminoacyl-tRNA + H2O = an N-acyl-L-amino acid + a tRNA + H(+). Hydrolyzes ribosome-free peptidyl-tRNAs (with 1 or more amino acids incorporated), which drop off the ribosome during protein synthesis, or as a result of ribosome stalling. In terms of biological role, catalyzes the release of premature peptidyl moieties from peptidyl-tRNA molecules trapped in stalled 50S ribosomal subunits, and thus maintains levels of free tRNAs and 50S ribosomes. In Chlorobium luteolum (strain DSM 273 / BCRC 81028 / 2530) (Pelodictyon luteolum), this protein is Peptidyl-tRNA hydrolase.